The following is a 370-amino-acid chain: 3-isopropylmalate dehydrogenase (370 aa).

The substrate site is built by Arg99, Arg109, Arg137, and Asp227. 3 residues coordinate Mg(2+): Asp227, Asp251, and Asp255. Gly290–Asn302 provides a ligand contact to NAD(+).

The protein belongs to the isocitrate and isopropylmalate dehydrogenases family. LeuB type 1 subfamily. In terms of assembly, homodimer. The cofactor is Mg(2+). It depends on Mn(2+) as a cofactor.

It localises to the cytoplasm. The catalysed reaction is (2R,3S)-3-isopropylmalate + NAD(+) = 4-methyl-2-oxopentanoate + CO2 + NADH. Its pathway is amino-acid biosynthesis; L-leucine biosynthesis; L-leucine from 3-methyl-2-oxobutanoate: step 3/4. In terms of biological role, catalyzes the oxidation of 3-carboxy-2-hydroxy-4-methylpentanoate (3-isopropylmalate) to 3-carboxy-4-methyl-2-oxopentanoate. The product decarboxylates to 4-methyl-2 oxopentanoate. The sequence is that of 3-isopropylmalate dehydrogenase from Rhodospirillum rubrum (strain ATCC 11170 / ATH 1.1.1 / DSM 467 / LMG 4362 / NCIMB 8255 / S1).